A 466-amino-acid chain; its full sequence is UDP-N-acetylmuramoylalanine--D-glutamate ligase (466 aa).

121-127 lines the ATP pocket; the sequence is GTNGKST.

The protein belongs to the MurCDEF family.

It is found in the cytoplasm. The enzyme catalyses UDP-N-acetyl-alpha-D-muramoyl-L-alanine + D-glutamate + ATP = UDP-N-acetyl-alpha-D-muramoyl-L-alanyl-D-glutamate + ADP + phosphate + H(+). The protein operates within cell wall biogenesis; peptidoglycan biosynthesis. In terms of biological role, cell wall formation. Catalyzes the addition of glutamate to the nucleotide precursor UDP-N-acetylmuramoyl-L-alanine (UMA). The chain is UDP-N-acetylmuramoylalanine--D-glutamate ligase from Nitrobacter winogradskyi (strain ATCC 25391 / DSM 10237 / CIP 104748 / NCIMB 11846 / Nb-255).